Reading from the N-terminus, the 838-residue chain is Ribonuclease Z (838 aa).

S824 bears the Phosphoserine mark.

The protein belongs to the RNase Z family. As to quaternary structure, homodimer. Zn(2+) is required as a cofactor.

Its subcellular location is the cytoplasm. The protein localises to the nucleus. The enzyme catalyses Endonucleolytic cleavage of RNA, removing extra 3' nucleotides from tRNA precursor, generating 3' termini of tRNAs. A 3'-hydroxy group is left at the tRNA terminus and a 5'-phosphoryl group is left at the trailer molecule.. Its function is as follows. Zinc phosphodiesterase, which displays some tRNA 3'-processing endonuclease activity. Probably involved in tRNA maturation, by removing a 3'-trailer from precursor tRNA. The chain is Ribonuclease Z (TRZ1) from Saccharomyces cerevisiae (strain ATCC 204508 / S288c) (Baker's yeast).